The following is a 306-amino-acid chain: Sulfate adenylyltransferase subunit 2 (306 aa).

This sequence belongs to the PAPS reductase family. CysD subfamily. As to quaternary structure, heterodimer composed of CysD, the smaller subunit, and CysN.

The catalysed reaction is sulfate + ATP + H(+) = adenosine 5'-phosphosulfate + diphosphate. It functions in the pathway sulfur metabolism; hydrogen sulfide biosynthesis; sulfite from sulfate: step 1/3. Its function is as follows. With CysN forms the ATP sulfurylase (ATPS) that catalyzes the adenylation of sulfate producing adenosine 5'-phosphosulfate (APS) and diphosphate, the first enzymatic step in sulfur assimilation pathway. APS synthesis involves the formation of a high-energy phosphoric-sulfuric acid anhydride bond driven by GTP hydrolysis by CysN coupled to ATP hydrolysis by CysD. This Brucella anthropi (strain ATCC 49188 / DSM 6882 / CCUG 24695 / JCM 21032 / LMG 3331 / NBRC 15819 / NCTC 12168 / Alc 37) (Ochrobactrum anthropi) protein is Sulfate adenylyltransferase subunit 2.